A 210-amino-acid chain; its full sequence is Imidazoleglycerol-phosphate dehydratase (210 aa).

It belongs to the imidazoleglycerol-phosphate dehydratase family.

Its subcellular location is the cytoplasm. The catalysed reaction is D-erythro-1-(imidazol-4-yl)glycerol 3-phosphate = 3-(imidazol-4-yl)-2-oxopropyl phosphate + H2O. It functions in the pathway amino-acid biosynthesis; L-histidine biosynthesis; L-histidine from 5-phospho-alpha-D-ribose 1-diphosphate: step 6/9. This Mycobacterium bovis (strain ATCC BAA-935 / AF2122/97) protein is Imidazoleglycerol-phosphate dehydratase.